The following is a 557-amino-acid chain: Dihydroxy-acid dehydratase (557 aa).

Aspartate 78 lines the Mg(2+) pocket. Cysteine 119 contacts [2Fe-2S] cluster. The Mg(2+) site is built by aspartate 120 and lysine 121. The residue at position 121 (lysine 121) is an N6-carboxylysine. Cysteine 192 provides a ligand contact to [2Fe-2S] cluster. Glutamate 443 lines the Mg(2+) pocket. Serine 469 functions as the Proton acceptor in the catalytic mechanism.

Belongs to the IlvD/Edd family. Homodimer. [2Fe-2S] cluster is required as a cofactor. It depends on Mg(2+) as a cofactor.

It carries out the reaction (2R)-2,3-dihydroxy-3-methylbutanoate = 3-methyl-2-oxobutanoate + H2O. The catalysed reaction is (2R,3R)-2,3-dihydroxy-3-methylpentanoate = (S)-3-methyl-2-oxopentanoate + H2O. It functions in the pathway amino-acid biosynthesis; L-isoleucine biosynthesis; L-isoleucine from 2-oxobutanoate: step 3/4. It participates in amino-acid biosynthesis; L-valine biosynthesis; L-valine from pyruvate: step 3/4. In terms of biological role, functions in the biosynthesis of branched-chain amino acids. Catalyzes the dehydration of (2R,3R)-2,3-dihydroxy-3-methylpentanoate (2,3-dihydroxy-3-methylvalerate) into 2-oxo-3-methylpentanoate (2-oxo-3-methylvalerate) and of (2R)-2,3-dihydroxy-3-methylbutanoate (2,3-dihydroxyisovalerate) into 2-oxo-3-methylbutanoate (2-oxoisovalerate), the penultimate precursor to L-isoleucine and L-valine, respectively. This Persephonella marina (strain DSM 14350 / EX-H1) protein is Dihydroxy-acid dehydratase.